A 215-amino-acid polypeptide reads, in one-letter code: Large ribosomal subunit protein uL3 (215 aa).

A disordered region spans residues 136–155 (GVSISHRSHGSTGQRQDPGK). N5-methylglutamine is present on Gln-151.

This sequence belongs to the universal ribosomal protein uL3 family. Part of the 50S ribosomal subunit. Forms a cluster with proteins L14 and L19. Methylated by PrmB.

In terms of biological role, one of the primary rRNA binding proteins, it binds directly near the 3'-end of the 23S rRNA, where it nucleates assembly of the 50S subunit. The chain is Large ribosomal subunit protein uL3 from Rickettsia felis (strain ATCC VR-1525 / URRWXCal2) (Rickettsia azadi).